A 239-amino-acid chain; its full sequence is 1-(5-phosphoribosyl)-5-[(5-phosphoribosylamino)methylideneamino] imidazole-4-carboxamide isomerase (239 aa).

D8 functions as the Proton acceptor in the catalytic mechanism. D129 (proton donor) is an active-site residue.

Belongs to the HisA/HisF family.

The protein localises to the cytoplasm. The catalysed reaction is 1-(5-phospho-beta-D-ribosyl)-5-[(5-phospho-beta-D-ribosylamino)methylideneamino]imidazole-4-carboxamide = 5-[(5-phospho-1-deoxy-D-ribulos-1-ylimino)methylamino]-1-(5-phospho-beta-D-ribosyl)imidazole-4-carboxamide. Its pathway is amino-acid biosynthesis; L-histidine biosynthesis; L-histidine from 5-phospho-alpha-D-ribose 1-diphosphate: step 4/9. The protein is 1-(5-phosphoribosyl)-5-[(5-phosphoribosylamino)methylideneamino] imidazole-4-carboxamide isomerase of Bacillus cereus (strain ZK / E33L).